We begin with the raw amino-acid sequence, 177 residues long: Putative HTH-type transcriptional regulator YvaV (177 aa).

Positions 49–73 (LTELSEATGMSKTRMSQVVREMLDA) form a DNA-binding region, H-T-H motif.

It belongs to the GbsR family.

In Bacillus subtilis (strain 168), this protein is Putative HTH-type transcriptional regulator YvaV (yvaV).